A 561-amino-acid chain; its full sequence is Centromere protein T (561 aa).

The disordered stretch occupies residues methionine 1–arginine 78. The span at arginine 18–threonine 27 shows a compositional bias: basic and acidic residues. Positions threonine 45–threonine 57 are enriched in polar residues. Serine 47 bears the Phosphoserine mark. Threonine 85 carries the phosphothreonine modification. The tract at residues isoleucine 93 to proline 421 is flexible stalk domain. 3 disordered regions span residues alanine 114 to leucine 134, histidine 256 to alanine 293, and serine 314 to lysine 457. The span at arginine 276 to proline 289 shows a compositional bias: polar residues. A compositionally biased stretch (basic and acidic residues) spans glycine 329 to glycine 341. Residues serine 343, serine 345, serine 356, serine 373, serine 385, serine 386, and serine 397 each carry the phosphoserine modification. Over residues threonine 365 to threonine 376 the composition is skewed to polar residues. Positions arginine 439–arginine 450 are enriched in low complexity.

Belongs to the CENP-T/CNN1 family. As to quaternary structure, component of the CENPA-CAD complex, composed of CENPI, CENPK, CENPL, CENPO, CENPP, CENPQ, CENPR and CENPS. The CENPA-CAD complex is probably recruited on centromeres by the CENPA-NAC complex, at least composed of CENPA, CENPC, CENPH, CENPM, CENPN, CENPT and CENPU. Identified in a centromeric complex containing histones H2A, H2B, H3 and H4, and at least CENPA, CENPB, CENPC, CENPT, CENPN, HJURP, SUPT16H, SSRP1 and RSF1. Interacts (via N-terminus) with the NDC80 complex. Heterodimer with CENPW; this dimer coassembles with CENPS-CENPX heterodimers at centromeres to form the tetrameric CENP-T-W-S-X complex. In terms of processing, dynamically phosphorylated during the cell cycle. Phosphorylated during G2 phase, metaphase and anaphase, but not during telophase or G1 phase.

The protein resides in the nucleus. The protein localises to the chromosome. It is found in the centromere. Its subcellular location is the kinetochore. Its function is as follows. Component of the CENPA-NAC (nucleosome-associated) complex, a complex that plays a central role in assembly of kinetochore proteins, mitotic progression and chromosome segregation. The CENPA-NAC complex recruits the CENPA-CAD (nucleosome distal) complex and may be involved in incorporation of newly synthesized CENPA into centromeres. Part of a nucleosome-associated complex that binds specifically to histone H3-containing nucleosomes at the centromere, as opposed to nucleosomes containing CENPA. Component of the heterotetrameric CENP-T-W-S-X complex that binds and supercoils DNA, and plays an important role in kinetochore assembly. CENPT has a fundamental role in kinetochore assembly and function. It is one of the inner kinetochore proteins, with most further proteins binding downstream. Required for normal chromosome organization and normal progress through mitosis. In Macaca fascicularis (Crab-eating macaque), this protein is Centromere protein T (CENPT).